Here is a 460-residue protein sequence, read N- to C-terminus: Argininosuccinate lyase (460 aa).

It belongs to the lyase 1 family. Argininosuccinate lyase subfamily.

Its subcellular location is the cytoplasm. It carries out the reaction 2-(N(omega)-L-arginino)succinate = fumarate + L-arginine. It participates in amino-acid biosynthesis; L-arginine biosynthesis; L-arginine from L-ornithine and carbamoyl phosphate: step 3/3. In Pelotomaculum thermopropionicum (strain DSM 13744 / JCM 10971 / SI), this protein is Argininosuccinate lyase.